The sequence spans 678 residues: Putative cyclic nucleotide-gated ion channel 15 (678 aa).

Topologically, residues 1-81 (MGYGNSRSVR…RGQTIRRWNK (81 aa)) are cytoplasmic. The helical transmembrane segment at 82–102 (IFLIACLVSLFVDPLFFFLPV) threads the bilayer. Over 103-115 (MRNEACITIGVRL) the chain is Extracellular. Residues 116–136 (EVVLTLIRSLADAFYIAQILI) traverse the membrane as a helical segment. The Cytoplasmic segment spans residues 137–170 (RFRTAYIAPPSRVFGRGELVIDSRKIAWRYLHKS). Residues 171–191 (FWIHLVAALPLPQVLIWIIIP) traverse the membrane as a helical segment. The Extracellular segment spans residues 192–203 (NLRGSPMTNTKN). A helical membrane pass occupies residues 204-224 (VLRFIIIFQYVPRMFLIFPLS). The Cytoplasmic portion of the chain corresponds to 225–245 (RQIIKATGVVTETAWAGAAYN). The helical transmembrane segment at 246–266 (LMLYMLASHVLGACWYLLAVE) threads the bilayer. The Extracellular segment spans residues 267 to 364 (RQEACWRHAC…GQNLATSTYA (98 aa)). A helical membrane pass occupies residues 365-385 (GEILFAIIIATLGLVLFALLI). Residues 386-678 (GNMQTYLQST…KPVEPDFSSE (293 aa)) lie on the Cytoplasmic side of the membrane. Residues 471-595 (LFDQ…TKQL) and Glu-542 contribute to the a nucleoside 3',5'-cyclic phosphate site. The calmodulin-binding stretch occupies residues 587-602 (FRRLHTKQLRHKFRFY). The IQ domain maps to 607 to 638 (RTWAACFIQAAWRRHRKRKYKTELRAKEEFHY). The span at 656–668 (RSGSDSGMMSSIQ) shows a compositional bias: polar residues. A disordered region spans residues 656 to 678 (RSGSDSGMMSSIQKPVEPDFSSE).

It belongs to the cyclic nucleotide-gated cation channel (TC 1.A.1.5) family. As to quaternary structure, homotetramer or heterotetramer.

Its subcellular location is the cell membrane. Its function is as follows. Putative cyclic nucleotide-gated ion channel. This chain is Putative cyclic nucleotide-gated ion channel 15 (CNGC15), found in Arabidopsis thaliana (Mouse-ear cress).